The following is a 232-amino-acid chain: Orotate phosphoribosyltransferase (232 aa).

Residues R107, K108, K111, H113, and 133 to 141 (EDLTTAGGS) contribute to the 5-phospho-alpha-D-ribose 1-diphosphate site. T137 is an orotate binding site.

The protein belongs to the purine/pyrimidine phosphoribosyltransferase family. PyrE subfamily. In terms of assembly, homodimer. Mg(2+) is required as a cofactor.

The catalysed reaction is orotidine 5'-phosphate + diphosphate = orotate + 5-phospho-alpha-D-ribose 1-diphosphate. It participates in pyrimidine metabolism; UMP biosynthesis via de novo pathway; UMP from orotate: step 1/2. Catalyzes the transfer of a ribosyl phosphate group from 5-phosphoribose 1-diphosphate to orotate, leading to the formation of orotidine monophosphate (OMP). This is Orotate phosphoribosyltransferase from Rhizobium rhizogenes (strain K84 / ATCC BAA-868) (Agrobacterium radiobacter).